Here is a 184-residue protein sequence, read N- to C-terminus: Protein GrpE (184 aa).

Over residues 1 to 10 (MSQETEKDLE) the composition is skewed to basic and acidic residues. The segment at 1 to 38 (MSQETEKDLEQTQNEELVEEAQSDEKKDQEVDPVEAAQ) is disordered.

It belongs to the GrpE family. Homodimer.

It is found in the cytoplasm. In terms of biological role, participates actively in the response to hyperosmotic and heat shock by preventing the aggregation of stress-denatured proteins, in association with DnaK and GrpE. It is the nucleotide exchange factor for DnaK and may function as a thermosensor. Unfolded proteins bind initially to DnaJ; upon interaction with the DnaJ-bound protein, DnaK hydrolyzes its bound ATP, resulting in the formation of a stable complex. GrpE releases ADP from DnaK; ATP binding to DnaK triggers the release of the substrate protein, thus completing the reaction cycle. Several rounds of ATP-dependent interactions between DnaJ, DnaK and GrpE are required for fully efficient folding. This chain is Protein GrpE, found in Sulfurovum sp. (strain NBC37-1).